Consider the following 619-residue polypeptide: UPF0329 protein ECU08_2070 (619 aa).

2 stretches are compositionally biased toward basic and acidic residues: residues 350–359 and 369–385; these read EREKREESKG and GAGE…RKEE. The interval 350-425 is disordered; that stretch reads EREKREESKG…REKKMGEEHH (76 aa). Over residues 386 to 396 the composition is skewed to acidic residues; sequence EGVEVEEEESA.

It belongs to the UPF0329 family.

This is UPF0329 protein ECU08_2070 from Encephalitozoon cuniculi (strain GB-M1) (Microsporidian parasite).